A 330-amino-acid chain; its full sequence is G-protein coupled receptor 3 (330 aa).

Topologically, residues 1–42 (MMWGAGSSMAWFSAGSGSVNVSSVDPVEEPTGPATLLPSPRA) are extracellular. Asn20 carries N-linked (GlcNAc...) asparagine glycosylation. A helical membrane pass occupies residues 43–62 (WDVVLCISGTLVSCENALVV). Residues 63–74 (AIIVGTPAFRAP) lie on the Cytoplasmic side of the membrane. The chain crosses the membrane as a helical span at residues 75–98 (MFLLVGSLAVADLLAGLGLVLHFA). Topologically, residues 99 to 110 (ADFCIGSPEMSL) are extracellular. A helical transmembrane segment spans residues 111-132 (MLVGVLAMAFTASIGSLLAITV). At 133-153 (DRYLSLYNALTYYSETTVTRT) the chain is on the cytoplasmic side. Residues 154–173 (YVMLALVWVGALGLGLVPVL) traverse the membrane as a helical segment. At 174 to 198 (AWNCRDGLTTCGVVYPLSKNHLVVL) the chain is on the extracellular side. A helical membrane pass occupies residues 199–217 (AIAFFMVFGIMLQLYAQIC). At 218-245 (RIVCRHAQQIALQRHLLPASHYVATRKG) the chain is on the cytoplasmic side. Residues 246–272 (IATLAVVLGAFAACWLPFTVYCLLGDA) form a helical membrane-spanning segment. Over 273-277 (DSPRL) the chain is Extracellular. Residues 278–299 (YTYLTLLPATYNSMINPVIYAF) traverse the membrane as a helical segment. Over 300–330 (RNQDVQKVLWAICCCCSTSKIPFRSRSPSDV) the chain is Cytoplasmic. Cys313 carries S-palmitoyl cysteine lipidation. Ser324, Ser326, and Ser328 each carry phosphoserine.

Belongs to the G-protein coupled receptor 1 family. Expressed in both the forebrain and hindbrain, with the highest level in habenula. Lower level expression in the testis. Expressed in several metabolically active peripheral tissues, although at lower levels than in the central nervous system (CNS).

It is found in the cell membrane. Functionally, constitutively active G-protein coupled receptor that maintains high 3'-5'-cyclic adenosine monophosphate (cAMP) levels that a plays a role in serveral processes including meiotic arrest in oocytes or neuronal development via activation of numerous intracellular signaling pathways. Acts as an essential activator of thermogenic adipocytes and drives thermogenesis via its intrinsic G(s)-coupling activity without the requirement of a ligand. Has a potential role in modulating a number of brain functions, including behavioral responses to stress, amyloid-beta peptide generation in neurons. Stimulates neurite outgrowth in cerebellar granular neurons modulated via PKA, ERK, and most strongly PI3K-mediated signaling pathways. The protein is G-protein coupled receptor 3 (Gpr3) of Mus musculus (Mouse).